Consider the following 929-residue polypeptide: DNA mismatch repair protein MutS (929 aa).

A disordered region spans residues 22–46 (PAAPRSTGSAAAPPPSPAVLDDRSG). Positions 23-32 (AAPRSTGSAA) are enriched in low complexity. 678 to 685 (GPNMAGKS) provides a ligand contact to ATP.

Belongs to the DNA mismatch repair MutS family.

This protein is involved in the repair of mismatches in DNA. It is possible that it carries out the mismatch recognition step. This protein has a weak ATPase activity. This Rhodospirillum rubrum (strain ATCC 11170 / ATH 1.1.1 / DSM 467 / LMG 4362 / NCIMB 8255 / S1) protein is DNA mismatch repair protein MutS.